A 677-amino-acid chain; its full sequence is DNA gyrase subunit B, novobiocin-resistant (677 aa).

The disordered stretch occupies residues 1-23 (MTTYDTRTATDTRGSEQPGHVGT). Positions 154–295 (IWTDGHRWTQ…RLLSAEIALQ (142 aa)) are novobiocin-binding. One can recognise a Toprim domain in the interval 456–570 (SEIFIVEGDS…EGHVHLSRPP (115 aa)). The Mg(2+) site is built by glutamate 462, aspartate 535, and aspartate 537.

This sequence belongs to the type II topoisomerase GyrB family. As to quaternary structure, heterotetramer, composed of two GyrA and two GyrB chains. In the heterotetramer, GyrA contains the active site tyrosine that forms a transient covalent intermediate with DNA, while GyrB binds cofactors and catalyzes ATP hydrolysis. Requires Mg(2+) as cofactor. The cofactor is Mn(2+). Ca(2+) is required as a cofactor.

The protein localises to the cytoplasm. It carries out the reaction ATP-dependent breakage, passage and rejoining of double-stranded DNA.. A type II topoisomerase that negatively supercoils closed circular double-stranded (ds) DNA in an ATP-dependent manner to modulate DNA topology and maintain chromosomes in an underwound state. Negative supercoiling favors strand separation, and DNA replication, transcription, recombination and repair, all of which involve strand separation. Also able to catalyze the interconversion of other topological isomers of dsDNA rings, including catenanes and knotted rings. Type II topoisomerases break and join 2 DNA strands simultaneously in an ATP-dependent manner. This chain is DNA gyrase subunit B, novobiocin-resistant, found in Streptomyces niveus (Streptomyces spheroides).